A 439-amino-acid polypeptide reads, in one-letter code: Cysteine desulfurase-like protein ustD (439 aa).

The segment at 1–25 (MKSVATSSLDDVDKDSVPLGSSING) is disordered. Pyridoxal 5'-phosphate contacts are provided by residues 120-121 (TT), N206, and 255-257 (SWY). N6-(pyridoxal phosphate)lysine is present on K258.

It belongs to the class-V pyridoxal-phosphate-dependent aminotransferase family. Requires pyridoxal 5'-phosphate as cofactor.

The protein operates within mycotoxin biosynthesis. Its function is as follows. Cysteine desulfurase-like protein; part of the gene cluster that mediates the biosynthesis of the secondary metabolite ustiloxin B, an antimitotic tetrapeptide. First, ustA is processed by the subtilisin-like endoprotease Kex2 that is outside the ustiloxin B gene cluster, at the C-terminal side of Arg-Lys, after transfer to Golgi apparatus through the endoplasmic reticulum (ER). Cleavage by KEX2 generates 16 peptides YAIG-I to YAIG-XVI. To process the precursor peptide further, at least two peptidases are necessary to cleave the N-terminal and C-terminal sides of the Tyr-Ala-Ile-Gly core peptide which serves as backbone for the synthesis of ustiloxin B, through cyclization and modification of the tyrosine with a non-protein coding amino acid, norvaline. One of the two peptidases must be the serine peptidase ustP; and the other pepdidase is probably ustH. Macrocyclization of the core peptide derived from ustA requires the tyrosinase ustQ, as well as the homologous oxidases ustYa and ustYb, and leads to the production of the first cyclization product N-desmethylustiloxin F. For the formation of N-desmethylustiloxin F, three oxidation steps are required, hydroxylation at the benzylic position, hydroxylation at either the aromatic ring of Tyr or beta-position of Ile, and oxidative cyclization. UstQ may catalyze the oxidation of a phenol moiety, whereas the ustYa and ustYb are most likely responsible for the remaining two-step oxidations. N-desmethylustiloxin F is then methylated by ustM to yield ustiloxin F which in turn substrate of the cytochrome P450 monooxygenase ustC which catalyzes the formation of S-deoxyustiloxin H. The flavoprotein monooxygenases ustF1 and ustF2 then participate in the modification of the side chain of S-deoxyustiloxin H, leading to the synthesis of an oxime intermediate, via ustiloxin H. Finally, carboxylative dehydration performed by the cysteine desulfurase-like protein ustD yields ustiloxin B. This is Cysteine desulfurase-like protein ustD from Aspergillus flavus (strain ATCC 200026 / FGSC A1120 / IAM 13836 / NRRL 3357 / JCM 12722 / SRRC 167).